A 113-amino-acid polypeptide reads, in one-letter code: U11-theraphotoxin-Hhn1l (113 aa).

Positions 1 to 21 (MNTGRVTFLVVFLVAVSLGPA) are cleaved as a signal peptide. A propeptide spanning residues 22–74 (DKEENPMEMQEKTQQGKNYLNFGENLVVPKLEELKAKLVEKESKKSKNSRQKR) is cleaved from the precursor. Intrachain disulfides connect Cys82-Cys95 and Cys89-Cys110.

It belongs to the neurotoxin 14 (magi-1) family. 01 (HNTX-16) subfamily. Expressed by the venom gland.

It localises to the secreted. Functionally, probable ion channel inhibitor. In Cyriopagopus hainanus (Chinese bird spider), this protein is U11-theraphotoxin-Hhn1l.